The chain runs to 229 residues: MVRYQDIVDDVYSKLFLLEQWKKVYPLTEYYDVYIDVCYGHRVRAFIQNLGFTLEQESFTIHIEYDLPCIPGLAEFLRLWNNFDLRGKYIYRATTKKYINEYVLAFTPFMIVNEPYEKENKYLSYWSVSPYTSNYFVRAYVERYGVNPKEIVVLVAPYDDRICSKDWYDNFSPEYTIIQDGKPTNFGDMRYLRELEVRCFKYSVSRLIYQLPYSDFLELMKLLPSKYVY.

This is an uncharacterized protein from Sulfolobus islandicus filamentous virus (isolate Iceland/Hveragerdi) (SIFV).